The following is a 341-amino-acid chain: Eukaryotic translation initiation factor 3 subunit I (341 aa).

5 WD repeats span residues 8–49 (GHER…GTYH), 50–91 (GHQG…HTWE), 145–184 (CDES…QLHS), 189–228 (DMGS…VLKT), and 286–325 (GHFG…FDFM).

The protein belongs to the eIF-3 subunit I family. In terms of assembly, component of the eukaryotic translation initiation factor 3 (eIF-3) complex.

It localises to the cytoplasm. Its function is as follows. Component of the eukaryotic translation initiation factor 3 (eIF-3) complex, which is involved in protein synthesis of a specialized repertoire of mRNAs and, together with other initiation factors, stimulates binding of mRNA and methionyl-tRNAi to the 40S ribosome. The eIF-3 complex specifically targets and initiates translation of a subset of mRNAs involved in cell proliferation. The chain is Eukaryotic translation initiation factor 3 subunit I from Pyricularia oryzae (strain 70-15 / ATCC MYA-4617 / FGSC 8958) (Rice blast fungus).